The primary structure comprises 464 residues: UDP-N-acetylmuramate--L-alanine ligase (464 aa).

ATP is bound at residue 118–124; sequence GTHGKTT.

Belongs to the MurCDEF family.

Its subcellular location is the cytoplasm. It carries out the reaction UDP-N-acetyl-alpha-D-muramate + L-alanine + ATP = UDP-N-acetyl-alpha-D-muramoyl-L-alanine + ADP + phosphate + H(+). It participates in cell wall biogenesis; peptidoglycan biosynthesis. Cell wall formation. The chain is UDP-N-acetylmuramate--L-alanine ligase from Dinoroseobacter shibae (strain DSM 16493 / NCIMB 14021 / DFL 12).